A 414-amino-acid chain; its full sequence is Voltage-gated ClC-type chloride channel ClcB (414 aa).

A run of 11 helical transmembrane segments spans residues 5–25 (LVISIMLGMVSALIVWLFHQA), 54–74 (ALTPALGGLAAGLLLWAYQRY), 116–136 (SAIGREGAMVLLAALFASVFA), 147–167 (LWVACGAAAGMASAYHAPLAG), 169–189 (LFIAEILFGTLMLASLGPVVI), 220–240 (VQYFLMALLGLMAGFSGPLFL), 255–275 (LLPPLQLALGGIIVGLLSLIF), 292–312 (TPPGVLLIGGILICKLLAVLA), 327–347 (LFVGAALGMLCGQIFSLWPVL), 353–373 (LLMALTGMATLLAATTHAPIM), and 381–401 (MTGEYTLLPGLLLSCVIATTI).

This sequence belongs to the chloride channel (TC 2.A.49) family. ClcB subfamily.

The protein resides in the cell inner membrane. Probably acts as an electrical shunt for an outwardly-directed proton pump that is linked to amino acid decarboxylation, as part of the extreme acid resistance (XAR) response. The polypeptide is Voltage-gated ClC-type chloride channel ClcB (Yersinia pseudotuberculosis serotype O:1b (strain IP 31758)).